The following is a 396-amino-acid chain: Acetylornithine aminotransferase 2 (396 aa).

Pyridoxal 5'-phosphate is bound by residues 102–103 (GA) and F134. R137 lines the N(2)-acetyl-L-ornithine pocket. 219–222 (DEVQ) lines the pyridoxal 5'-phosphate pocket. K248 carries the N6-(pyridoxal phosphate)lysine modification. Position 276 (T276) interacts with pyridoxal 5'-phosphate.

Belongs to the class-III pyridoxal-phosphate-dependent aminotransferase family. ArgD subfamily. As to quaternary structure, homodimer. Pyridoxal 5'-phosphate serves as cofactor.

The protein localises to the cytoplasm. It carries out the reaction N(2)-acetyl-L-ornithine + 2-oxoglutarate = N-acetyl-L-glutamate 5-semialdehyde + L-glutamate. Its pathway is amino-acid biosynthesis; L-arginine biosynthesis; N(2)-acetyl-L-ornithine from L-glutamate: step 4/4. This Bordetella bronchiseptica (strain ATCC BAA-588 / NCTC 13252 / RB50) (Alcaligenes bronchisepticus) protein is Acetylornithine aminotransferase 2.